The sequence spans 819 residues: LPS-assembly protein LptD (819 aa).

A signal peptide spans 1–33 (MRQMKYQFKFNPLAAAIFTLLCGGSMQSSYADA).

It belongs to the LptD family. Component of the lipopolysaccharide transport and assembly complex. Interacts with LptE and LptA.

The protein localises to the cell outer membrane. Its function is as follows. Together with LptE, is involved in the assembly of lipopolysaccharide (LPS) at the surface of the outer membrane. The protein is LPS-assembly protein LptD of Acinetobacter baylyi (strain ATCC 33305 / BD413 / ADP1).